We begin with the raw amino-acid sequence, 269 residues long: Magnetosome protein MamX (269 aa).

The Cytoplasmic portion of the chain corresponds to 1–10 (MNTKAVAHPD). Residues 11-31 (IAVWIMALGIAFSMALVLTAL) form a helical membrane-spanning segment. The Lumenal segment spans residues 32 to 269 (FNANPWEDHT…NVGGVDAEER (238 aa)). An MCR (magnetochrome) 1 motif is present at residues 48-71 (IVAGMAAPHRDGREKMVCSSCHIV). 6 residues coordinate heme: C65, C68, H69, C104, C107, and H108. Positions 87-110 (IVEGTPAPHVDGREKMACASCHTI) match the MCR 2 motif.

This sequence belongs to the magnetosome MamX family. Probably interacts with FtsZ-like and MamY proteins. Heme serves as cofactor.

The protein localises to the magnetosome membrane. Functionally, required for correct biomineralization of the magnetosome, maybe via redox control. May function with MamY, MamZ amd Mms6 in biomineralization. The polypeptide is Magnetosome protein MamX (Magnetospirillum gryphiswaldense (strain DSM 6361 / JCM 21280 / NBRC 15271 / MSR-1)).